Reading from the N-terminus, the 156-residue chain is Small ribosomal subunit protein uS7 (156 aa).

It belongs to the universal ribosomal protein uS7 family. Part of the 30S ribosomal subunit. Contacts proteins S9 and S11.

In terms of biological role, one of the primary rRNA binding proteins, it binds directly to 16S rRNA where it nucleates assembly of the head domain of the 30S subunit. Is located at the subunit interface close to the decoding center, probably blocks exit of the E-site tRNA. This chain is Small ribosomal subunit protein uS7, found in Mycoplasma mobile (strain ATCC 43663 / 163K / NCTC 11711) (Mesomycoplasma mobile).